Reading from the N-terminus, the 747-residue chain is ESX-1 secretion system protein EccCa1 (747 aa).

3 helical membrane-spanning segments follow: residues 41–61, 65–85, and 222–242; these read ILPY…VAGG, LSPY…GGLA, and FPTI…TAMI. One can recognise a FtsK domain in the interval 456–665; sequence GNVMYLDIKE…LRTTSSHESK (210 aa). 479–486 contributes to the ATP binding site; the sequence is GTTGSGKS.

As to quaternary structure, part of the ESX-1 / type VII secretion system (T7SS), which is composed of cytosolic and membrane components. The ESX-1 membrane complex is composed of EccB1, EccCa1, EccCb1, EccD1 and EccE1.

It is found in the cell inner membrane. Part of the ESX-1 specialized secretion system, which delivers several virulence factors to host cells during infection, including the key virulence factors EsxA (ESAT-6) and EsxB (CFP-10). The polypeptide is ESX-1 secretion system protein EccCa1 (Mycobacterium tuberculosis (strain CDC 1551 / Oshkosh)).